Here is a 323-residue protein sequence, read N- to C-terminus: Sphingolipid delta(4)-desaturase DES1 (323 aa).

Gly-2 carries the N-myristoyl glycine lipid modification. 2 helical membrane-spanning segments follow: residues 41–61 and 68–88; these read PNLI…FYLV and WLMF…TLAI. The short motif at 89-93 is the Histidine box-1 element; the sequence is HEISH. Residues 104–124 traverse the membrane as a helical segment; it reads WNRWFGMFANLSLGVPYSISF. A Histidine box-2 motif is present at residues 128–132; that stretch reads HMDHH. Helical transmembrane passes span 152–172, 184–204, and 210–230; these read FFCT…FYAF, HLEV…YYVF, and VYML…GHFI. The short motif at 259-263 is the Histidine box-3 element; the sequence is HNEHH. Position 307 is a phosphoserine (Ser-307).

Belongs to the fatty acid desaturase type 1 family. DEGS subfamily. As to quaternary structure, interacts with RLBP1; the interaction increases synthesis of chromophore-precursors by DEGS1. In terms of processing, myristoylation can target the enzyme to the mitochondria leading to an increase in ceramide levels.

It localises to the mitochondrion membrane. The protein localises to the endoplasmic reticulum membrane. It carries out the reaction an N-acylsphinganine + 2 Fe(II)-[cytochrome b5] + O2 + 2 H(+) = an N-acylsphing-4-enine + 2 Fe(III)-[cytochrome b5] + 2 H2O. The enzyme catalyses all-trans-retinol = 11-cis-retinol. The catalysed reaction is all-trans-retinol = 9-cis-retinol. It catalyses the reaction all-trans-retinol = 13-cis-retinol. It carries out the reaction 11-cis-retinol = 13-cis-retinol. The enzyme catalyses 11-cis-retinol = 9-cis-retinol. Has sphingolipid-delta-4-desaturase activity. Converts D-erythro-sphinganine to D-erythro-sphingosine (E-sphing-4-enine). Catalyzes the equilibrium isomerization of retinols. In Rattus norvegicus (Rat), this protein is Sphingolipid delta(4)-desaturase DES1.